The primary structure comprises 147 residues: uncharacterized protein (147 aa).

Residues 44-147 form the HTH LytTR-type domain; that stretch reads LVGYIDKEIH…LKSIKERLSI (104 aa).

The protein resides in the cytoplasm. This is an uncharacterized protein from Staphylococcus aureus (strain Mu50 / ATCC 700699).